Here is a 122-residue protein sequence, read N- to C-terminus: Double-headed protease inhibitor, submandibular gland (122 aa).

2 consecutive Kazal-like domains span residues 10 to 70 and 71 to 121; these read GGRK…ECDI and ECTQ…QCQS. Intrachain disulfides connect C16/C50, C28/C47, C36/C68, C72/C101, C79/C98, and C87/C119.

The protein resides in the secreted. Functionally, this inhibitor is composed of two homologous actively inhibiting halves: one which inhibits trypsin, the other which inhibits elastase. This is Double-headed protease inhibitor, submandibular gland from Panthera uncia (Snow leopard).